The primary structure comprises 224 residues: Deoxyribose-phosphate aldolase (224 aa).

Aspartate 92 serves as the catalytic Proton donor/acceptor. Lysine 155 serves as the catalytic Schiff-base intermediate with acetaldehyde. The active-site Proton donor/acceptor is lysine 184.

It belongs to the DeoC/FbaB aldolase family. DeoC type 1 subfamily.

The protein resides in the cytoplasm. It carries out the reaction 2-deoxy-D-ribose 5-phosphate = D-glyceraldehyde 3-phosphate + acetaldehyde. Its pathway is carbohydrate degradation; 2-deoxy-D-ribose 1-phosphate degradation; D-glyceraldehyde 3-phosphate and acetaldehyde from 2-deoxy-alpha-D-ribose 1-phosphate: step 2/2. In terms of biological role, catalyzes a reversible aldol reaction between acetaldehyde and D-glyceraldehyde 3-phosphate to generate 2-deoxy-D-ribose 5-phosphate. This Clostridium perfringens (strain 13 / Type A) protein is Deoxyribose-phosphate aldolase.